The following is a 1157-amino-acid chain: DNA-directed RNA polymerase subunit beta (1157 aa).

It belongs to the RNA polymerase beta chain family. In terms of assembly, the RNAP catalytic core consists of 2 alpha, 1 beta, 1 beta' and 1 omega subunit. When a sigma factor is associated with the core the holoenzyme is formed, which can initiate transcription.

The enzyme catalyses RNA(n) + a ribonucleoside 5'-triphosphate = RNA(n+1) + diphosphate. DNA-dependent RNA polymerase catalyzes the transcription of DNA into RNA using the four ribonucleoside triphosphates as substrates. The sequence is that of DNA-directed RNA polymerase subunit beta from Tropheryma whipplei (strain Twist) (Whipple's bacillus).